The following is a 358-amino-acid chain: Glutamine synthetase (358 aa).

Residues 25–104 (VQAEYIWIDA…VLCECYDNDG (80 aa)) form the GS beta-grasp domain. The GS catalytic domain occupies 111–358 (YRAHCKKVMD…ILVETTVLNN (248 aa)).

Belongs to the glutamine synthetase family. As to quaternary structure, homooctamer.

Its subcellular location is the cytoplasm. The catalysed reaction is L-glutamate + NH4(+) + ATP = L-glutamine + ADP + phosphate + H(+). The protein is Glutamine synthetase (GLN1) of Cryptococcus neoformans var. neoformans serotype D (strain B-3501A) (Filobasidiella neoformans).